The primary structure comprises 60 residues: Cytotoxin 1 (60 aa).

Intrachain disulfides connect cysteine 3–cysteine 21, cysteine 14–cysteine 38, cysteine 42–cysteine 53, and cysteine 54–cysteine 59.

It belongs to the three-finger toxin family. Short-chain subfamily. Type IA cytotoxin sub-subfamily. In terms of assembly, monomer in solution; Homodimer and oligomer in the presence of negatively charged lipids forming a pore with a size ranging between 20 and 30 Angstroms. As to expression, expressed by the venom gland.

Its subcellular location is the secreted. The protein localises to the target cell membrane. Functionally, shows cytolytic activity on many different cells by forming pore in lipid membranes. In vivo, increases heart rate or kills the animal by cardiac arrest. In addition, it binds to heparin with high affinity, interacts with Kv channel-interacting protein 1 (KCNIP1) in a calcium-independent manner, and binds to integrin alpha-V/beta-3 (ITGAV/ITGB3) with moderate affinity. This is Cytotoxin 1 from Naja melanoleuca (Forest cobra).